Consider the following 154-residue polypeptide: Endoribonuclease YbeY (154 aa).

Zn(2+) is bound by residues H114, H118, and H124.

Belongs to the endoribonuclease YbeY family. Requires Zn(2+) as cofactor.

The protein localises to the cytoplasm. Functionally, single strand-specific metallo-endoribonuclease involved in late-stage 70S ribosome quality control and in maturation of the 3' terminus of the 16S rRNA. In Histophilus somni (strain 2336) (Haemophilus somnus), this protein is Endoribonuclease YbeY.